We begin with the raw amino-acid sequence, 79 residues long: Acyl carrier protein (79 aa).

In terms of domain architecture, Carrier spans 2–77; that stretch reads SDIEARVRKI…HAIDYIKSNA (76 aa). The residue at position 37 (Ser37) is an O-(pantetheine 4'-phosphoryl)serine.

The protein belongs to the acyl carrier protein (ACP) family. Post-translationally, 4'-phosphopantetheine is transferred from CoA to a specific serine of apo-ACP by AcpS. This modification is essential for activity because fatty acids are bound in thioester linkage to the sulfhydryl of the prosthetic group.

The protein localises to the cytoplasm. Its pathway is lipid metabolism; fatty acid biosynthesis. Its function is as follows. Carrier of the growing fatty acid chain in fatty acid biosynthesis. This Xylella fastidiosa (strain M23) protein is Acyl carrier protein.